The primary structure comprises 214 residues: Probable transaldolase (214 aa).

Lysine 83 serves as the catalytic Schiff-base intermediate with substrate.

This sequence belongs to the transaldolase family. Type 3B subfamily.

It localises to the cytoplasm. It carries out the reaction D-sedoheptulose 7-phosphate + D-glyceraldehyde 3-phosphate = D-erythrose 4-phosphate + beta-D-fructose 6-phosphate. It functions in the pathway carbohydrate degradation; pentose phosphate pathway; D-glyceraldehyde 3-phosphate and beta-D-fructose 6-phosphate from D-ribose 5-phosphate and D-xylulose 5-phosphate (non-oxidative stage): step 2/3. In terms of biological role, transaldolase is important for the balance of metabolites in the pentose-phosphate pathway. The chain is Probable transaldolase from Streptococcus equi subsp. equi (strain 4047).